Consider the following 241-residue polypeptide: PRA1 family protein H (241 aa).

The next 3 helical transmembrane spans lie at 142 to 162, 189 to 205, and 209 to 228; these read LFIVFFACALYQMPLALVGLL, LSIGIGQCATAVLLTFL, and MALFSALAISYSVMILHAGF.

This sequence belongs to the PRA1 family.

The protein localises to the endoplasmic reticulum membrane. In terms of biological role, may be involved in both secretory and endocytic intracellular trafficking in the endosomal/prevacuolar compartments. The polypeptide is PRA1 family protein H (PRA1H) (Arabidopsis thaliana (Mouse-ear cress)).